The sequence spans 265 residues: Indole-3-glycerol phosphate synthase (265 aa).

It belongs to the TrpC family.

The enzyme catalyses 1-(2-carboxyphenylamino)-1-deoxy-D-ribulose 5-phosphate + H(+) = (1S,2R)-1-C-(indol-3-yl)glycerol 3-phosphate + CO2 + H2O. Its pathway is amino-acid biosynthesis; L-tryptophan biosynthesis; L-tryptophan from chorismate: step 4/5. This chain is Indole-3-glycerol phosphate synthase, found in Xanthomonas axonopodis pv. citri (strain 306).